Consider the following 22-residue polypeptide: Cysteine-rich venom protein collettin-a (22 aa).

The span at 1 to 15 (SNKKNYQKEIVDKHN) shows a compositional bias: basic and acidic residues. Residues 1–22 (SNKKNYQKEIVDKHNALRRSVK) are disordered.

It belongs to the CRISP family. Contains 8 disulfide bonds. Expressed by the venom gland.

Its subcellular location is the secreted. The chain is Cysteine-rich venom protein collettin-a from Pseudechis colletti (Collett's snake).